Consider the following 208-residue polypeptide: Glutathione S-transferase GstB (208 aa).

Positions 1–83 (MITLWGRNNS…YLAAQYGQKR (83 aa)) constitute a GST N-terminal domain. Residues Asn12, Asn39, Val53, and 67–68 (ES) each bind glutathione. In terms of domain architecture, GST C-terminal spans 88–208 (SPARRAEAEK…VRKVVMIPVS (121 aa)).

This sequence belongs to the GST superfamily.

The catalysed reaction is RX + glutathione = an S-substituted glutathione + a halide anion + H(+). Conjugation of reduced glutathione to a wide number of exogenous and endogenous hydrophobic electrophiles. The chain is Glutathione S-transferase GstB (gstB) from Escherichia coli O6:H1 (strain CFT073 / ATCC 700928 / UPEC).